The following is a 307-amino-acid chain: UDP-3-O-acyl-N-acetylglucosamine deacetylase (307 aa).

Residues His80, His239, and Asp243 each coordinate Zn(2+). His266 functions as the Proton donor in the catalytic mechanism.

Belongs to the LpxC family. It depends on Zn(2+) as a cofactor.

The enzyme catalyses a UDP-3-O-[(3R)-3-hydroxyacyl]-N-acetyl-alpha-D-glucosamine + H2O = a UDP-3-O-[(3R)-3-hydroxyacyl]-alpha-D-glucosamine + acetate. The protein operates within glycolipid biosynthesis; lipid IV(A) biosynthesis; lipid IV(A) from (3R)-3-hydroxytetradecanoyl-[acyl-carrier-protein] and UDP-N-acetyl-alpha-D-glucosamine: step 2/6. Its function is as follows. Catalyzes the hydrolysis of UDP-3-O-myristoyl-N-acetylglucosamine to form UDP-3-O-myristoylglucosamine and acetate, the committed step in lipid A biosynthesis. The chain is UDP-3-O-acyl-N-acetylglucosamine deacetylase from Neisseria gonorrhoeae (strain ATCC 700825 / FA 1090).